A 307-amino-acid polypeptide reads, in one-letter code: MTQKKIKCALIGPGNIGTDLLMKLQRSPILEPVWMVGIDPESDGLKRAREMGIKTTADGVDGLLPFVKEDGIQIAFDATSAYVHAENSRKLNELGVLMIDLTPAAIGPYCVPSVNLAEKVAEKAMNVNMVTCGGQATIPMVAAVSRVQAVSYGEIVATVSSRSVGPGTRKNIDEFTRTTSGAVEKIGGAQKGKAIIVINPAEPPLIMRDTIHCLTVDTPKPAEIEASVHAMIKEVQKYVPGYKLVNGPVIDGNRVSIYMEVEGLGDYLPKYAGNLDIMTAAAARTAEMFAEEILAGRFELAEAAVAV.

The Acyl-thioester intermediate role is filled by Cys-132. NAD(+)-binding positions include 163 to 171 (SVGPGTRKN) and Asn-274.

The protein belongs to the acetaldehyde dehydrogenase family.

It carries out the reaction acetaldehyde + NAD(+) + CoA = acetyl-CoA + NADH + H(+). This Comamonas testosteroni (Pseudomonas testosteroni) protein is Acetaldehyde dehydrogenase 1 (tesF).